The primary structure comprises 148 residues: uncharacterized protein (148 aa).

Positions 1 to 18 are cleaved as a signal peptide; that stretch reads MKIILTVLAGVGLLSAGG. Residue Cys19 is the site of N-palmitoyl cysteine attachment. Cys19 is lipidated: S-diacylglycerol cysteine.

The protein resides in the cell membrane. This is an uncharacterized protein from Bacillus subtilis (strain 168).